The following is a 207-amino-acid chain: Cytochrome c biogenesis ATP-binding export protein CcmA (207 aa).

In terms of domain architecture, ABC transporter spans 4–207 (LEARELLCER…RISLTQTGAA (204 aa)). 36–43 (GSNGAGKT) contacts ATP.

The protein belongs to the ABC transporter superfamily. CcmA exporter (TC 3.A.1.107) family. As to quaternary structure, the complex is composed of two ATP-binding proteins (CcmA) and two transmembrane proteins (CcmB).

It localises to the cell inner membrane. It catalyses the reaction heme b(in) + ATP + H2O = heme b(out) + ADP + phosphate + H(+). Part of the ABC transporter complex CcmAB involved in the biogenesis of c-type cytochromes; once thought to export heme, this seems not to be the case, but its exact role is uncertain. Responsible for energy coupling to the transport system. This Escherichia coli (strain UTI89 / UPEC) protein is Cytochrome c biogenesis ATP-binding export protein CcmA.